We begin with the raw amino-acid sequence, 148 residues long: SsrA-binding protein (148 aa).

It belongs to the SmpB family.

The protein localises to the cytoplasm. Required for rescue of stalled ribosomes mediated by trans-translation. Binds to transfer-messenger RNA (tmRNA), required for stable association of tmRNA with ribosomes. tmRNA and SmpB together mimic tRNA shape, replacing the anticodon stem-loop with SmpB. tmRNA is encoded by the ssrA gene; the 2 termini fold to resemble tRNA(Ala) and it encodes a 'tag peptide', a short internal open reading frame. During trans-translation Ala-aminoacylated tmRNA acts like a tRNA, entering the A-site of stalled ribosomes, displacing the stalled mRNA. The ribosome then switches to translate the ORF on the tmRNA; the nascent peptide is terminated with the 'tag peptide' encoded by the tmRNA and targeted for degradation. The ribosome is freed to recommence translation, which seems to be the essential function of trans-translation. This chain is SsrA-binding protein, found in Ehrlichia canis (strain Jake).